The primary structure comprises 499 residues: Pleckstrin homology domain-containing family O member 2 (499 aa).

Basic and acidic residues predominate over residues 1-11 (MEEEGVKEGGQ). Residues 1 to 21 (MEEEGVKEGGQRPRSAQTADK) are disordered. The PH domain occupies 18–119 (TADKAGWIKK…WIKALNEGIN (102 aa)). S167 is modified (phosphoserine). The tract at residues 170–419 (LSRLDLDVPD…RRRQPGEQLH (250 aa)) is disordered. The span at 201–212 (RPPMPPAKPSPA) shows a compositional bias: pro residues. A compositionally biased stretch (low complexity) spans 229-238 (SAPAPVPASS). Phosphoserine is present on residues S237 and S238. Residues 246 to 258 (EDLETPVVEDSDS) show a composition bias toward acidic residues. S273 is subject to Phosphoserine. T298 and T311 each carry phosphothreonine. Composition is skewed to low complexity over residues 329–349 (EASG…GPAE) and 367–386 (AAGP…TLPP). S399 is subject to Phosphoserine. Residues 416–492 (EQLHRAQLEV…LREKRRELVT (77 aa)) are a coiled coil.

The sequence is that of Pleckstrin homology domain-containing family O member 2 (PLEKHO2) from Bos taurus (Bovine).